The sequence spans 96 residues: Large ribosomal subunit protein uL23 (96 aa).

Belongs to the universal ribosomal protein uL23 family. Part of the 50S ribosomal subunit. Contacts protein L29, and trigger factor when it is bound to the ribosome.

Its function is as follows. One of the early assembly proteins it binds 23S rRNA. One of the proteins that surrounds the polypeptide exit tunnel on the outside of the ribosome. Forms the main docking site for trigger factor binding to the ribosome. The protein is Large ribosomal subunit protein uL23 of Halalkalibacterium halodurans (strain ATCC BAA-125 / DSM 18197 / FERM 7344 / JCM 9153 / C-125) (Bacillus halodurans).